The chain runs to 258 residues: Large ribosomal subunit protein uL15c (258 aa).

The N-terminal 65 residues, 1 to 65 (MSAASLIPVS…NVKSSGENVR (65 aa)), are a transit peptide targeting the chloroplast. Positions 67–90 (RLDNLGPQPGSRKRPKRKGRGIAA) are disordered. Residues 77 to 86 (SRKRPKRKGR) show a composition bias toward basic residues.

This sequence belongs to the universal ribosomal protein uL15 family. As to quaternary structure, part of the 50S ribosomal subunit.

The protein localises to the plastid. Its subcellular location is the chloroplast. The polypeptide is Large ribosomal subunit protein uL15c (RPL15) (Pisum sativum (Garden pea)).